The chain runs to 463 residues: Rop guanine nucleotide exchange factor 4 (463 aa).

Disordered regions lie at residues 1–25 and 55–87; these read MESS…YRRT and GHEE…SDID. A compositionally biased stretch (acidic residues) spans 59–68; that stretch reads DVSEDAEEPK. The segment covering 69–78 has biased composition (basic and acidic residues); that stretch reads DDVVNDVHGD. The PRONE domain occupies 84 to 463; the sequence is SDIDSAEDAE…VDRTVRNRDD (380 aa).

In terms of assembly, interacts with ARAC10/ROP11. As to expression, expressed in root vascular tissue and trichoblast cell files. Expressed in root metaxylem cell files. Expressed in guard cells of cotyledons, rosette leaves, sepals, petal, stigmas and siliques. Expressed in root metaxylem cell files.

The protein resides in the cytoplasm. It is found in the cell membrane. In terms of biological role, guanine-nucleotide exchange factor (GEF) that acts as an activator of Rop (Rho of plants) GTPases by promoting the exchange of GDP for GTP. In association with ROPGEF1, acts as a specific regulator of ARAC10/ROP11 function in ABA-mediated stomatal closure. The polypeptide is Rop guanine nucleotide exchange factor 4 (ROPGEF4) (Arabidopsis thaliana (Mouse-ear cress)).